Reading from the N-terminus, the 189-residue chain is RxLR effector protein CRE18 (189 aa).

An N-terminal signal peptide occupies residues 1–23 (MSKLFYAFAVLAVHVLTSSPTTA). The short motif at 47-68 (RFLRSIHEGEDSLKPSAFSEER) is the RxLR-dEER element.

This sequence belongs to the RxLR effector family.

The protein resides in the secreted. The protein localises to the host cytoplasm. Its subcellular location is the host nucleus. Effector that is involved in host plant infection. Contributes to virulence during the early infection stage, by inhibiting plant defense responses induced by both PAMP-triggered immunity (PTI) and effector-triggered immunity (ETI). This Phytophthora infestans (strain T30-4) (Potato late blight agent) protein is RxLR effector protein CRE18.